The chain runs to 426 residues: Phosphomethylpyrimidine synthase (426 aa).

Substrate is bound by residues N65, M94, Y123, H162, 184–186 (SRG), 225–228 (DGMR), and E264. H268 serves as a coordination point for Zn(2+). Residue Y291 participates in substrate binding. Position 332 (H332) interacts with Zn(2+). C408, C411, and C415 together coordinate [4Fe-4S] cluster.

The protein belongs to the ThiC family. [4Fe-4S] cluster is required as a cofactor.

The enzyme catalyses 5-amino-1-(5-phospho-beta-D-ribosyl)imidazole + S-adenosyl-L-methionine = 4-amino-2-methyl-5-(phosphooxymethyl)pyrimidine + CO + 5'-deoxyadenosine + formate + L-methionine + 3 H(+). Its pathway is cofactor biosynthesis; thiamine diphosphate biosynthesis. Catalyzes the synthesis of the hydroxymethylpyrimidine phosphate (HMP-P) moiety of thiamine from aminoimidazole ribotide (AIR) in a radical S-adenosyl-L-methionine (SAM)-dependent reaction. This is Phosphomethylpyrimidine synthase from Methanocaldococcus jannaschii (strain ATCC 43067 / DSM 2661 / JAL-1 / JCM 10045 / NBRC 100440) (Methanococcus jannaschii).